We begin with the raw amino-acid sequence, 194 residues long: Outer surface 22 kDa lipoprotein (194 aa).

Residues 1-21 form the signal peptide; that stretch reads MYKNGFFKNYLSLFLIFLVIA. Residue Cys-22 is the site of N-palmitoyl cysteine attachment. Cys-22 carries the S-diacylglycerol cysteine lipid modification.

The protein resides in the cell outer membrane. The polypeptide is Outer surface 22 kDa lipoprotein (p22) (Borreliella burgdorferi (strain ZS7) (Borrelia burgdorferi)).